A 240-amino-acid polypeptide reads, in one-letter code: Insulin-like growth factor-binding protein 3 receptor (240 aa).

An N-terminal signal peptide occupies residues 1 to 38; the sequence is MGSCQAGHNLHLCLAHHPPLVCATLILLLLGLSGLGLG. At 39–204 the chain is on the extracellular side; it reads GFLLTHTTGL…SEELALCGSR (166 aa). The N-linked (GlcNAc...) asparagine glycan is linked to Asn167. The chain crosses the membrane as a helical span at residues 205-225; the sequence is VLGLGFFLVLLCGLLCCTTAV. The Cytoplasmic portion of the chain corresponds to 226 to 240; it reads CFHPRPEFHWSRTRL.

In terms of assembly, interacts with IGFBP3. Interacts with CASP8.

The protein resides in the cell membrane. Functionally, cell death receptor specific for IGFBP3, may mediate caspase-8-dependent apoptosis upon ligand binding. This chain is Insulin-like growth factor-binding protein 3 receptor (Tmem219), found in Mus musculus (Mouse).